Here is a 421-residue protein sequence, read N- to C-terminus: Ameloblastin (421 aa).

A signal peptide spans 1–26 (MPALKIPLFKMKDMVLILCLLKMSSA). A Hydroxyproline modification is found at Pro37. A Phosphoserine modification is found at Ser43. 3 disordered regions span residues 104-126 (PVHP…QKPF), 264-311 (GGMP…ADPE), and 333-421 (GKIP…FQEP). O-linked (GalNAc...) serine glycosylation occurs at Ser112. Over residues 113–125 (QPSLQPQQPGQKP) the composition is skewed to low complexity. Residues 339 to 350 (ARGPAGRSRGPP) show a composition bias toward low complexity. A compositionally biased stretch (polar residues) spans 388–410 (MDSTATPYSEHTSMPGNKAQQPQ). The span at 411 to 421 (IKRDAWRFQEP) shows a compositional bias: basic and acidic residues.

This sequence belongs to the ameloblastin family. Ameloblast-specific. Located at the Tomes processes of secretory ameloblasts and in the sheath space between rod-interrod enamel.

It is found in the secreted. The protein resides in the extracellular space. The protein localises to the extracellular matrix. In terms of biological role, involved in the mineralization and structural organization of enamel. The chain is Ameloblastin (AMBN) from Sus scrofa (Pig).